Consider the following 198-residue polypeptide: Ribonuclease HII (198 aa).

An RNase H type-2 domain is found at 2 to 191; it reads VLECGVDETG…IRELLVGKDN (190 aa). 3 residues coordinate a divalent metal cation: D8, E9, and D100.

Belongs to the RNase HII family. Requires Mn(2+) as cofactor. The cofactor is Mg(2+).

It is found in the cytoplasm. The catalysed reaction is Endonucleolytic cleavage to 5'-phosphomonoester.. Endonuclease that specifically degrades the RNA of RNA-DNA hybrids. This chain is Ribonuclease HII, found in Desulforamulus reducens (strain ATCC BAA-1160 / DSM 100696 / MI-1) (Desulfotomaculum reducens).